A 248-amino-acid chain; its full sequence is Octanoyltransferase (248 aa).

Residues Ala-53–Ser-234 form the BPL/LPL catalytic domain. Substrate-binding positions include Arg-93–His-100, Ala-165–Gly-167, and Gly-178–Ser-180. Cys-196 acts as the Acyl-thioester intermediate in catalysis.

Belongs to the LipB family.

Its subcellular location is the cytoplasm. It catalyses the reaction octanoyl-[ACP] + L-lysyl-[protein] = N(6)-octanoyl-L-lysyl-[protein] + holo-[ACP] + H(+). The protein operates within protein modification; protein lipoylation via endogenous pathway; protein N(6)-(lipoyl)lysine from octanoyl-[acyl-carrier-protein]: step 1/2. In terms of biological role, catalyzes the transfer of endogenously produced octanoic acid from octanoyl-acyl-carrier-protein onto the lipoyl domains of lipoate-dependent enzymes. Lipoyl-ACP can also act as a substrate although octanoyl-ACP is likely to be the physiological substrate. The chain is Octanoyltransferase from Burkholderia multivorans (strain ATCC 17616 / 249).